Consider the following 274-residue polypeptide: 4-diphosphocytidyl-2-C-methyl-D-erythritol kinase (274 aa).

Residue lysine 8 is part of the active site. Residue 94 to 104 participates in ATP binding; sequence PSGAGLGGGSA. Aspartate 136 is an active-site residue.

Belongs to the GHMP kinase family. IspE subfamily.

The enzyme catalyses 4-CDP-2-C-methyl-D-erythritol + ATP = 4-CDP-2-C-methyl-D-erythritol 2-phosphate + ADP + H(+). It participates in isoprenoid biosynthesis; isopentenyl diphosphate biosynthesis via DXP pathway; isopentenyl diphosphate from 1-deoxy-D-xylulose 5-phosphate: step 3/6. Its function is as follows. Catalyzes the phosphorylation of the position 2 hydroxy group of 4-diphosphocytidyl-2C-methyl-D-erythritol. This chain is 4-diphosphocytidyl-2-C-methyl-D-erythritol kinase, found in Bacteroides fragilis (strain ATCC 25285 / DSM 2151 / CCUG 4856 / JCM 11019 / LMG 10263 / NCTC 9343 / Onslow / VPI 2553 / EN-2).